The primary structure comprises 57 residues: Small ribosomal subunit protein bS21 (57 aa).

The interval 35 to 57 (REHYEKPSVKRKKKAEAARKKKF) is disordered. Residues 43–57 (VKRKKKAEAARKKKF) are compositionally biased toward basic residues.

This sequence belongs to the bacterial ribosomal protein bS21 family.

The polypeptide is Small ribosomal subunit protein bS21 (Alkaliphilus metalliredigens (strain QYMF)).